The following is a 465-amino-acid chain: Cysteine--tRNA ligase (465 aa).

Residue Cys-27 coordinates Zn(2+). The 'HIGH' region signature appears at 29-39 (PTVYDDAHLGH). Zn(2+)-binding residues include Cys-207, His-237, and Glu-241. The 'KMSKS' region motif lies at 269 to 273 (KMSKS). ATP is bound at residue Lys-272.

This sequence belongs to the class-I aminoacyl-tRNA synthetase family. In terms of assembly, monomer. The cofactor is Zn(2+).

The protein localises to the cytoplasm. The enzyme catalyses tRNA(Cys) + L-cysteine + ATP = L-cysteinyl-tRNA(Cys) + AMP + diphosphate. The polypeptide is Cysteine--tRNA ligase (cysS) (Helicobacter pylori (strain ATCC 700392 / 26695) (Campylobacter pylori)).